The chain runs to 519 residues: MKYKDLRDFIHGLEQRGELRRVTQPVSPVLEMTELCDRVLRAGGPALLFDAPAGHRFPVLGNLFGTPRRVALGMGVDADDEAALASLRDIGRLLSALKEPDPPKRLKDAGKLLSLAKAVWDMSPKTVSAPPCQEIVWEGDDVDLHKLPIQTCWPGDAGPLLTWGLTVTRGPNKTRQNLGIYRQQLIGRNKLIMRWLAHRGGALDFREFALKHPGQPYPVAVVLGADPATMLGAVTPVPDSLSEYQFAGLLRGARTELAKCVTPGVDALQVPARAEIVLEGFIHPQQGAPAPAPEGAPPRPAAGAAAGYEHALEGPYGDHTGYYNEQEWFPVFTVERITMRRDAIYHSTYTGKPPDEPAVLGVALNEVFVPLLQKQFAEITDFYLPPEGCSYRMAIVQMKKSYAGHAKRVMFGVWSFLRQFMYTKFIVVVDEDVNVRDWKEVIWAITTRVDPARDTVLVENTPIDYLDFASPVAGLGSKMGLDATNKWPGETQREWGRPIEMDAAVKARVDRLWTEIGLS.

Asparagine 177 provides a ligand contact to Mn(2+). Prenylated FMN-binding positions include 180–182 (IYR), 194–196 (RWL), and 199–200 (RG). Residue glutamate 243 participates in Mn(2+) binding. Aspartate 318 acts as the Proton donor in catalysis.

The protein belongs to the UbiD family. As to quaternary structure, homohexamer. Prenylated FMN serves as cofactor. It depends on Mn(2+) as a cofactor.

It is found in the cell membrane. It catalyses the reaction a 4-hydroxy-3-(all-trans-polyprenyl)benzoate + H(+) = a 2-(all-trans-polyprenyl)phenol + CO2. Its pathway is cofactor biosynthesis; ubiquinone biosynthesis. Catalyzes the decarboxylation of 3-octaprenyl-4-hydroxy benzoate to 2-octaprenylphenol, an intermediate step in ubiquinone biosynthesis. The protein is 3-octaprenyl-4-hydroxybenzoate carboxy-lyase of Burkholderia pseudomallei (strain 1710b).